A 287-amino-acid chain; its full sequence is Movement protein (287 aa).

The protein belongs to the nucleorhabdovirus type-1 movement protein family.

Functionally, transports viral genome to neighboring plant cells directly through plasmosdesmata, without any budding. The movement protein allows efficient cell to cell propagation, by bypassing the host cell wall barrier. This Colocasia esculenta (Wild taro) protein is Movement protein (3).